Here is a 146-residue protein sequence, read N- to C-terminus: MGGTADFVLSITIVLVILIIIAFIWYNFTGWSPFKYSKGNTVTFKTPDESSIAYMRFRNCIFTFTDPKGSLHSIDVTEVLNNMAKGFRDAQNPPSSFTLGGHCQAPLNAFSFVLPGVNDRATVATADDAKKWENCDATLTGLQRII.

The helical transmembrane segment at 7-27 (FVLSITIVLVILIIIAFIWYN) threads the bilayer.

The protein belongs to the asfivirus E146L family.

It is found in the host membrane. The protein localises to the virion. This is an uncharacterized protein from Ornithodoros (relapsing fever ticks).